We begin with the raw amino-acid sequence, 411 residues long: Carbohydrate sulfotransferase 1 (411 aa).

Met1 is a topological domain (cytoplasmic). Residues 2-23 traverse the membrane as a helical; Signal-anchor for type II membrane protein segment; sequence QCSWKAVLLLALASIAIQYTAI. At 24-411 the chain is on the lumenal side; it reads RTFTAKSFHT…VEERDFRPFL (388 aa). A glycan (N-linked (GlcNAc...) asparagine) is linked at Asn56. Residue 69–75 participates in 3'-phosphoadenylyl sulfate binding; sequence TRSGSSF. Residues Asn145 and Asn189 are each glycosylated (N-linked (GlcNAc...) asparagine). 234 to 242 is a 3'-phosphoadenylyl sulfate binding site; it reads RDPRGILAS. A glycan (N-linked (GlcNAc...) asparagine) is linked at Asn334. The Cell attachment site motif lies at 337–339; it reads RGD.

It belongs to the sulfotransferase 1 family. Gal/GlcNAc/GalNAc subfamily.

It localises to the golgi apparatus membrane. The enzyme catalyses 3'-phosphoadenylyl sulfate + keratan = adenosine 3',5'-bisphosphate + keratan 6'-sulfate.. The protein operates within glycan metabolism. Functionally, sulfotransferase that utilizes 3'-phospho-5'-adenylyl sulfate (PAPS) as sulfonate donor to catalyze the transfer of sulfate to position 6 of internal galactose (Gal) residues of keratan. Cooperates with B4GALT4 and B3GNT7 glycosyltransferases and CHST6 sulfotransferase to construct and elongate disulfated disaccharide unit [-&gt;3(6-sulfoGalbeta)1-&gt;4(6-sulfoGlcNAcbeta)1-&gt;] within keratan sulfate polymer. Has a preference for sulfating keratan sulfate, but it also transfers sulfate to the unsulfated polymer. Involved in biosynthesis of phosphacan, a major keratan sulfate proteoglycan in the developing brain. Involved in biosynthesis of 6-sulfoGalbeta-containing O-linked glycans in high endothelial venules of lymph nodes. May act in a synergistic manner with CHST4 to generate sialyl 6',6-disulfo Lewis X motif, a recognition determinant for immune cell receptors implicated in leukocyte trafficking. Catalyzes sulfation of N-acetyllactosamine (LacNAc) oligosaccharides with highest efficiency for sialylated LacNAc structures. The polypeptide is Carbohydrate sulfotransferase 1 (Chst1) (Rattus norvegicus (Rat)).